The following is a 246-amino-acid chain: Ribonuclease 3 (246 aa).

Residues 18-147 form the RNase III domain; the sequence is FKELQKKIGI…FIGALYLDQG (130 aa). Glutamate 60 provides a ligand contact to Mg(2+). The active site involves aspartate 64. Mg(2+) is bound by residues aspartate 133 and glutamate 136. Glutamate 136 is a catalytic residue. The DRBM domain maps to 173-242; it reads DFKSQLQELV…AQMALQKLKT (70 aa).

It belongs to the ribonuclease III family. As to quaternary structure, homodimer. Requires Mg(2+) as cofactor.

It is found in the cytoplasm. It catalyses the reaction Endonucleolytic cleavage to 5'-phosphomonoester.. Functionally, digests double-stranded RNA. Involved in the processing of primary rRNA transcript to yield the immediate precursors to the large and small rRNAs (23S and 16S). Processes some mRNAs, and tRNAs when they are encoded in the rRNA operon. Processes pre-crRNA and tracrRNA of type II CRISPR loci if present in the organism. The chain is Ribonuclease 3 from Geobacillus sp. (strain WCH70).